Reading from the N-terminus, the 422-residue chain is Protein king tubby 2 (422 aa).

The tract at residues 49–169 (PSNPDQIISS…ASGHNDAEGD (121 aa)) is disordered. The span at 57–81 (SSGSPTTVTATGTTTGSVTTTPTSP) shows a compositional bias: low complexity.

Belongs to the TUB family.

It is found in the cytoplasm. Its subcellular location is the nucleus. The protein is Protein king tubby 2 (king-tubby2) of Culex quinquefasciatus (Southern house mosquito).